The following is an 84-amino-acid chain: Antimicrobial peptide MeuNaTxbeta-2 (84 aa).

An N-terminal signal peptide occupies residues 1-20 (MMKTVIVLIVFSLVMIVVKS). An LCN-type CS-alpha/beta domain is found at 21-83 (DNGYLLDKYT…LWHYETNRCR (63 aa)). Cystine bridges form between Cys-32–Cys-82, Cys-36–Cys-57, Cys-43–Cys-64, and Cys-47–Cys-66.

In terms of tissue distribution, expressed by the venom gland.

The protein resides in the secreted. In terms of biological role, antimicrobial peptide with activity against both Gram-positive and -negative bacteria. In Mesobuthus eupeus (Lesser Asian scorpion), this protein is Antimicrobial peptide MeuNaTxbeta-2.